Consider the following 334-residue polypeptide: Glycosylinositol phosphorylceramide mannosyl transferase 1 (334 aa).

Topologically, residues 1-26 (MGGGEVSKEMGACSLAYRRGDQKLRK) are cytoplasmic. Residues 27–49 (FVTARSTKFLLFCCIAFVLVTIV) traverse the membrane as a helical; Signal-anchor for type II membrane protein segment. Residues 50-334 (CRSSRPWVNS…AVDSRNLWFW (285 aa)) are Lumenal-facing. A glycan (N-linked (GlcNAc...) asparagine) is linked at Asn58. Substrate-binding positions include 145-150 (DSLNNR), 166-168 (DDD), Arg196, and 258-262 (RNCED). Residue Asp168 coordinates Mn(2+). A disulfide bridge connects residues Cys260 and Cys305. Residue Asp262 is part of the active site. Asn271 carries an N-linked (GlcNAc...) asparagine glycan. Residues 289–302 (STGI…TEKR) and 292–302 (ISSIGGHTEKR) each bind substrate.

The protein belongs to the glycosyltransferase 64 family. The cofactor is Mn(2+). Expressed in leaves, roots, stem, and flowers.

It localises to the golgi apparatus membrane. Its pathway is protein modification; protein glycosylation. It functions in the pathway sphingolipid metabolism. Functionally, mannosyl transferase (ManT) required for the biosynthesis of mannose-carrying glycosylinositol phosphorylceramides (GIPCs). Maybe involved in cell-cell adhesion that maintains the integrity of organs by providing mechanical strength and facilitating the movement of metabolites throughout the plant during development. Prevents abscisic acid- (ABA-) mediated effects on development (e.g. cell size, flowering time, senescence). Probably implicated in beta-(1,4)-galactan biosynthesis thus being a cell-wall synthesis-related (CWSR) protein. The sequence is that of Glycosylinositol phosphorylceramide mannosyl transferase 1 from Arabidopsis thaliana (Mouse-ear cress).